The chain runs to 101 residues: Small ribosomal subunit protein uS14 (101 aa).

It belongs to the universal ribosomal protein uS14 family. In terms of assembly, part of the 30S ribosomal subunit. Contacts proteins S3 and S10.

Its function is as follows. Binds 16S rRNA, required for the assembly of 30S particles and may also be responsible for determining the conformation of the 16S rRNA at the A site. This chain is Small ribosomal subunit protein uS14, found in Buchnera aphidicola subsp. Acyrthosiphon pisum (strain APS) (Acyrthosiphon pisum symbiotic bacterium).